Here is a 196-residue protein sequence, read N- to C-terminus: Probable peptidyl-prolyl cis-trans isomerase (196 aa).

The N-terminal stretch at 1 to 26 (MSFIRSALAAAAFVALSIGAVQTASA) is a signal peptide. The PPIase cyclophilin-type domain maps to 29-194 (PENTVILKLK…KIIKATIEAD (166 aa)).

This sequence belongs to the cyclophilin-type PPIase family.

Its subcellular location is the periplasm. The catalysed reaction is [protein]-peptidylproline (omega=180) = [protein]-peptidylproline (omega=0). Its function is as follows. PPIases accelerate the folding of proteins. It catalyzes the cis-trans isomerization of proline imidic peptide bonds in oligopeptides. This Brucella abortus (strain 2308) protein is Probable peptidyl-prolyl cis-trans isomerase (ppi).